The following is a 375-amino-acid chain: Ribonuclease D (375 aa).

Residues 3–169 (YQMITTDDAL…LPITAKLMVE (167 aa)) form the 3'-5' exonuclease domain. One can recognise an HRDC domain in the interval 210-289 (RTRQLACLQL…EKAQTLPEDA (80 aa)).

The protein belongs to the RNase D family. Requires a divalent metal cation as cofactor.

It localises to the cytoplasm. It carries out the reaction Exonucleolytic cleavage that removes extra residues from the 3'-terminus of tRNA to produce 5'-mononucleotides.. Exonuclease involved in the 3' processing of various precursor tRNAs. Initiates hydrolysis at the 3'-terminus of an RNA molecule and releases 5'-mononucleotides. The polypeptide is Ribonuclease D (Escherichia coli (strain K12)).